We begin with the raw amino-acid sequence, 392 residues long: 5-azacytidine-induced protein 2 (392 aa).

Residues 1 to 197 (MDALVEDDIC…IELQKAKQTD (197 aa)) are homodimerization. 3 coiled-coil regions span residues 40 to 76 (ALVT…LIAR), 102 to 135 (DRDN…EVEL), and 166 to 196 (DLKI…AKQT). Positions 216–257 (SDNMQHAYWELKREMSNLHLVTQVQAELLRKLKTSTAIKKAC) are interaction with TBK1 and IKBKE. A phosphoserine mark is found at serine 318 and serine 353. Positions 345-365 (EDNSWVFPSPPKSSETAFGET) are disordered.

In terms of assembly, homodimer. Interacts with IKBKE, TBK1 and TICAM1. Interacts with TAX1BP1. Interacts with CALCOCO2. Ubiquitinated via 'Lys-48'-linked polyubiquitination by TRIM38, leading to its degradation.

The protein localises to the cytoplasm. Adapter protein which binds TBK1 and IKBKE playing a role in antiviral innate immunity. Activates serine/threonine-protein kinase TBK1 and facilitates its oligomerization. Enhances the phosphorylation of NF-kappa-B p65 subunit RELA by TBK1. Promotes TBK1-induced as well as TNF-alpha or PMA-induced activation of NF-kappa-B. Participates in IFNB promoter activation via TICAM1. The polypeptide is 5-azacytidine-induced protein 2 (AZI2) (Pongo abelii (Sumatran orangutan)).